Here is a 163-residue protein sequence, read N- to C-terminus: Oocyte-secreted protein 1 (163 aa).

The signal sequence occupies residues 1-21; the sequence is MKPSSGLRGLLVLFSLTWTCA.

The protein belongs to the PLAC1 family. As to expression, oocyte-specific.

The protein resides in the secreted. In terms of biological role, may be involved in cell differentiation. This is Oocyte-secreted protein 1 (OOSP1) from Bos taurus (Bovine).